Consider the following 310-residue polypeptide: MLGGGWRSLGTALVALGAGALLRAGPAQLRAVFLHTEHEQRKSKTVAQANMKVEVLPALTDNYMYLLIDEETKEAAIVDPVQPQKVLDAVKKHGVKLTSVLTTHHHWDHAGGNEKLVKLETGLRVYGGDSRVGALTQKVSHLTSLKVGSLNVKCLCTPCHTSGHICYYVTKPNSSEPPAVFTGDTLFVAGCGKFFEGTPEEMYRALIEILGSLDPETRVYCGHEYTINNLKFARHVEPNNVSIQEKLAWAKAKYDSGEPTIPSTIAEEFTYNPFMRVREKTVQEHAGETDPIRTMGAIRKEKDNFRVPKD.

Zn(2+)-binding residues include H104, H106, D108, H109, H160, and D184. Substrate-binding positions include K193–F195, H223–Y225, and R299–K302. H223 serves as a coordination point for Zn(2+).

The protein belongs to the metallo-beta-lactamase superfamily. Glyoxalase II family. In terms of assembly, monomer. Requires Zn(2+) as cofactor.

Its subcellular location is the mitochondrion matrix. The protein localises to the cytoplasm. It catalyses the reaction an S-(2-hydroxyacyl)glutathione + H2O = a 2-hydroxy carboxylate + glutathione + H(+). The enzyme catalyses (R)-S-lactoylglutathione + H2O = (R)-lactate + glutathione + H(+). Functionally, thiolesterase that catalyzes the hydrolysis of S-D-lactoyl-glutathione to form glutathione and D-lactic acid. The sequence is that of Hydroxyacylglutathione hydrolase, mitochondrial (HAGH) from Gallus gallus (Chicken).